The chain runs to 471 residues: MTDTDKTKAASSMWGGRFAGGPAAIMQRINASIDFDKRLYAQDIRGSKAHCRMLVKQQILTEADGALILDGLDKVLAEIEAGNFPFSHALEDIHMNVESRLAELIGEAAGRLHTARSRNDQVATDFRLWVRDAVDGMESALKELVTALLDRAEEHAATVMPGFTHLQTAQPVTFGHHMMAYVEMISRDRSRLADARRRLNECPLGSAALAGTSFPIDREATARDLGFAGPMRNSLDGVSDRDFALEFMSASAICAVHLSRLAEELVIWTSSQFRFVTLSDAFTTGSSIMPQKRNPDAAELIRAKTGRVIGDLNALLIVMKGLPLAYSKDMQDDKEPVFEVADTMELAIAAMTGMVRDMTVNVDILRAAAGAGFTTATDIADWCVRALKMPFRRAHHVAGSLVKLAEGKNCGLEDLTLAEMQAIEPGITEEARSVLSVESSVNSRTSLGGTAPVRVREAVAGARRRLMDEAP.

It belongs to the lyase 1 family. Argininosuccinate lyase subfamily.

It localises to the cytoplasm. The catalysed reaction is 2-(N(omega)-L-arginino)succinate = fumarate + L-arginine. The protein operates within amino-acid biosynthesis; L-arginine biosynthesis; L-arginine from L-ornithine and carbamoyl phosphate: step 3/3. This is Argininosuccinate lyase from Paramagnetospirillum magneticum (strain ATCC 700264 / AMB-1) (Magnetospirillum magneticum).